A 668-amino-acid chain; its full sequence is Fructose-1,6-bisphosphatase class 3 (668 aa).

This sequence belongs to the FBPase class 3 family. The cofactor is Mn(2+).

It carries out the reaction beta-D-fructose 1,6-bisphosphate + H2O = beta-D-fructose 6-phosphate + phosphate. It participates in carbohydrate biosynthesis; gluconeogenesis. The sequence is that of Fructose-1,6-bisphosphatase class 3 from Clostridium botulinum (strain Kyoto / Type A2).